A 229-amino-acid chain; its full sequence is Putative germin-like protein 12-3 (229 aa).

Positions 1-22 (MASSNFFLLIPLIALVTTQAMA) are cleaved as a signal peptide. An intrachain disulfide couples Cys32 to Cys47. In terms of domain architecture, Cupin type-1 spans 62-217 (ANLDKPMDIT…AFQVDKKAVD (156 aa)). N-linked (GlcNAc...) asparagine glycosylation occurs at Asn78. Residues His111, His113, Glu118, and His162 each coordinate Mn(2+).

Belongs to the germin family. Oligomer (believed to be a pentamer but probably hexamer).

It localises to the secreted. The protein resides in the extracellular space. It is found in the apoplast. Its function is as follows. May play a role in plant defense. Probably has no oxalate oxidase activity even if the active site is conserved. The sequence is that of Putative germin-like protein 12-3 from Oryza sativa subsp. japonica (Rice).